The chain runs to 361 residues: Zinc transporter ZIP13 (361 aa).

Over 1 to 6 (MPGCPC) the chain is Lumenal. A helical transmembrane segment spans residues 7–27 (PGCGMAGQRLLFLTVLALELL). The Cytoplasmic segment spans residues 28–68 (ERAGGSQPALRSLGAAAACRLDNKESESWGALLSGERLDTW). A helical transmembrane segment spans residues 69 to 89 (ICSLLGSLMVGLSGVFPLLVI). Residues 90–108 (PLEMGTLLQSEAGAWRLRQ) are Lumenal-facing. The helical transmembrane segment at 109-129 (LLSFALGGLLGNVFLHLLPEA) threads the bilayer. At 130 to 150 (WAYTCNITPGGEGQSLQRQQQ) the chain is on the cytoplasmic side. The chain crosses the membrane as a helical span at residues 151–171 (LGLWVIAGFLTFLALEKMFLN). At 172 to 232 (SKEDPSQAPS…TIDNFTHGLA (61 aa)) the chain is on the lumenal side. Residues 233 to 253 (VAASFLVSKKIGLLTTMAILL) traverse the membrane as a helical segment. Residues 254 to 259 (HEIPHE) carry the XEXPHE-motif motif. Topologically, residues 254 to 275 (HEIPHEVGDFAILLRAGFDRWT) are cytoplasmic. Residues 276 to 296 (AAKLQFSTALGGLLGACFAIC) traverse the membrane as a helical segment. The Lumenal portion of the chain corresponds to 297–306 (TQSPKGVEET). Residues 307 to 327 (VVWILPFTSGGFLYIALVNVL) traverse the membrane as a helical segment. At 328–339 (PDLLEEDDPWHS) the chain is on the cytoplasmic side. The chain crosses the membrane as a helical span at residues 340–360 (LQQVLLLCSGVLVMVLLSLFV). Position 361 (E361) is a topological domain, lumenal.

It belongs to the ZIP transporter (TC 2.A.5) family. In terms of assembly, homodimer. In terms of tissue distribution, highly expressed in some tissues such as bone and eye. Expressed in osteoblasts of tibia and of alveolar bone, in proliferative zone of growth plate, and in odontoblasts on the forming of the dentine of crown in molar tooth. Also expressed fibroblasts in reticular layer of dermis of skin.

It is found in the golgi apparatus membrane. It localises to the cytoplasmic vesicle membrane. The protein localises to the endoplasmic reticulum membrane. The catalysed reaction is Zn(2+)(in) = Zn(2+)(out). Functionally, functions as a zinc transporter transporting Zn(2+) from the Golgi apparatus to the cytosol and thus influences the zinc level at least in areas of the cytosol. May regulate beige adipocyte differentiation. This is Zinc transporter ZIP13 from Mus musculus (Mouse).